The sequence spans 285 residues: Tryptophan synthase alpha chain (285 aa).

Catalysis depends on proton acceptor residues glutamate 53 and aspartate 64.

It belongs to the TrpA family. In terms of assembly, tetramer of two alpha and two beta chains.

It catalyses the reaction (1S,2R)-1-C-(indol-3-yl)glycerol 3-phosphate + L-serine = D-glyceraldehyde 3-phosphate + L-tryptophan + H2O. It functions in the pathway amino-acid biosynthesis; L-tryptophan biosynthesis; L-tryptophan from chorismate: step 5/5. In terms of biological role, the alpha subunit is responsible for the aldol cleavage of indoleglycerol phosphate to indole and glyceraldehyde 3-phosphate. The chain is Tryptophan synthase alpha chain from Bordetella pertussis (strain Tohama I / ATCC BAA-589 / NCTC 13251).